The following is a 209-amino-acid chain: Imidazoleglycerol-phosphate dehydratase (209 aa).

Belongs to the imidazoleglycerol-phosphate dehydratase family.

It is found in the cytoplasm. The enzyme catalyses D-erythro-1-(imidazol-4-yl)glycerol 3-phosphate = 3-(imidazol-4-yl)-2-oxopropyl phosphate + H2O. It participates in amino-acid biosynthesis; L-histidine biosynthesis; L-histidine from 5-phospho-alpha-D-ribose 1-diphosphate: step 6/9. In Paracidovorax citrulli (strain AAC00-1) (Acidovorax citrulli), this protein is Imidazoleglycerol-phosphate dehydratase.